Here is a 201-residue protein sequence, read N- to C-terminus: Protease (201 aa).

Residues histidine 55, aspartate 72, and cysteine 122 contribute to the active site.

It belongs to the peptidase C5 family. Interacts with protease cofactor pVI-C; this interaction is necessary for protease activation.

The protein localises to the virion. It is found in the host nucleus. The catalysed reaction is Cleaves proteins of the adenovirus and its host cell at two consensus sites: -Yaa-Xaa-Gly-Gly-|-Xaa- and -Yaa-Xaa-Gly-Xaa-|-Gly- (in which Yaa is Met, Ile or Leu, and Xaa is any amino acid).. Requires DNA and protease cofactor for maximal activation. Inside nascent virions, becomes partially activated by binding to the viral DNA, allowing it to cleave the cofactor that binds to the protease and fully activates it. Actin, like the viral protease cofactor, seems to act as a cofactor in the cleavage of cytokeratin 18 and of actin itself. Cleaves viral precursor proteins (pTP, pIIIa, pVI, pVII, pVIII, and pX) inside newly assembled particles giving rise to mature virions. Protease complexed to its cofactor slides along the viral DNA to specifically locate and cleave the viral precursors. Mature virions have a weakened organization compared to the unmature virions, thereby facilitating subsequent uncoating. Without maturation, the particle lacks infectivity and is unable to uncoat. Late in adenovirus infection, in the cytoplasm, may participate in the cytoskeleton destruction. Cleaves host cell cytoskeletal keratins K7 and K18. The sequence is that of Protease from Ovis aries (Sheep).